A 192-amino-acid chain; its full sequence is Mediator of RNA polymerase II transcription subunit 29 (192 aa).

The interval 32–51 (MQQQSPQQMQPAPVPQQTQQ) is disordered.

The protein belongs to the Mediator complex subunit 29 family. Component of the Mediator complex.

It localises to the nucleus. Its function is as follows. Component of the Mediator complex, a coactivator involved in the regulated transcription of nearly all RNA polymerase II-dependent genes. Mediator functions as a bridge to convey information from gene-specific regulatory proteins to the basal RNA polymerase II transcription machinery. Mediator is recruited to promoters by direct interactions with regulatory proteins and serves as a scaffold for the assembly of a functional preinitiation complex with RNA polymerase II and the general transcription factors. The protein is Mediator of RNA polymerase II transcription subunit 29 (ix) of Bombyx mori (Silk moth).